The sequence spans 157 residues: MRIGHGFDVHKFGGEGPLVIGGVRIPYEKGLLAHSDGDVALHAATDALLGAAALGDIGKLFPDTDPAFKGADSRVLLREAWKRIRAKGYRLGNLDITIIAQAPKMAPHIPQMRVFLAEDLQCHMDDVNVKATTTEQLGFTGRGEGIACEAVALLIKE.

Positions 8 and 10 each coordinate a divalent metal cation. 4-CDP-2-C-methyl-D-erythritol 2-phosphate contacts are provided by residues 8–10 (DVH) and 34–35 (HS). His42 is a binding site for a divalent metal cation. 4-CDP-2-C-methyl-D-erythritol 2-phosphate contacts are provided by residues 56-58 (DIG), 61-65 (FPDTD), 100-106 (AQAPKMA), 132-135 (TTTE), Phe139, and Arg142.

It belongs to the IspF family. Homotrimer. It depends on a divalent metal cation as a cofactor.

The catalysed reaction is 4-CDP-2-C-methyl-D-erythritol 2-phosphate = 2-C-methyl-D-erythritol 2,4-cyclic diphosphate + CMP. It functions in the pathway isoprenoid biosynthesis; isopentenyl diphosphate biosynthesis via DXP pathway; isopentenyl diphosphate from 1-deoxy-D-xylulose 5-phosphate: step 4/6. Its function is as follows. Involved in the biosynthesis of isopentenyl diphosphate (IPP) and dimethylallyl diphosphate (DMAPP), two major building blocks of isoprenoid compounds. Catalyzes the conversion of 4-diphosphocytidyl-2-C-methyl-D-erythritol 2-phosphate (CDP-ME2P) to 2-C-methyl-D-erythritol 2,4-cyclodiphosphate (ME-CPP) with a corresponding release of cytidine 5-monophosphate (CMP). In Serratia proteamaculans (strain 568), this protein is 2-C-methyl-D-erythritol 2,4-cyclodiphosphate synthase.